The sequence spans 210 residues: ATP-dependent Clp protease proteolytic subunit (210 aa).

Ser107 (nucleophile) is an active-site residue. The active site involves His132.

Belongs to the peptidase S14 family. In terms of assembly, fourteen ClpP subunits assemble into 2 heptameric rings which stack back to back to give a disk-like structure with a central cavity, resembling the structure of eukaryotic proteasomes.

It is found in the cytoplasm. It carries out the reaction Hydrolysis of proteins to small peptides in the presence of ATP and magnesium. alpha-casein is the usual test substrate. In the absence of ATP, only oligopeptides shorter than five residues are hydrolyzed (such as succinyl-Leu-Tyr-|-NHMec, and Leu-Tyr-Leu-|-Tyr-Trp, in which cleavage of the -Tyr-|-Leu- and -Tyr-|-Trp bonds also occurs).. Cleaves peptides in various proteins in a process that requires ATP hydrolysis. Has a chymotrypsin-like activity. Plays a major role in the degradation of misfolded proteins. In Chromobacterium violaceum (strain ATCC 12472 / DSM 30191 / JCM 1249 / CCUG 213 / NBRC 12614 / NCIMB 9131 / NCTC 9757 / MK), this protein is ATP-dependent Clp protease proteolytic subunit.